Consider the following 597-residue polypeptide: Gamma-terpinene synthase, chloroplastic (597 aa).

The N-terminal 47 residues, 1–47 (MATLSMQVSILSKQVKNLNSFGMRASKLPMVARRVDVSTTRLRPICS), are a transit peptide targeting the chloroplast. Residues aspartate 350 and aspartate 354 each coordinate Mn(2+). The DDXXD motif motif lies at 350–354 (DDVYD). Homodimerization stretches follow at residues 356–362 (YGTLDEL) and 428–464 (EAKWYYAGYTPTLAEYLENAKVSISSPTIISQVYFTL). Mn(2+)-binding residues include aspartate 494 and glutamate 502.

Belongs to the terpene synthase family. In terms of assembly, homodimer. The cofactor is Mn(2+). It depends on Mg(2+) as a cofactor.

The protein localises to the plastid. The protein resides in the chloroplast. It carries out the reaction (2E)-geranyl diphosphate = gamma-terpinene + diphosphate. It functions in the pathway secondary metabolite biosynthesis; terpenoid biosynthesis. Its function is as follows. Involved in the biosynthesis of phenolic monoterpenes natural products thymol and carvacrol which have a broad range of biological activities acting as antimicrobial compounds, insecticides, antioxidants and pharmaceutical agents. Monoterpene synthase which catalyzes the conversion of geranyl diphosphate (GPP) to gamma-terpinene. This Thymus caespititius (Cretan thyme) protein is Gamma-terpinene synthase, chloroplastic.